Reading from the N-terminus, the 511-residue chain is ATP synthase subunit alpha (511 aa).

An ATP-binding site is contributed by glycine 169–threonine 176.

This sequence belongs to the ATPase alpha/beta chains family. F-type ATPases have 2 components, CF(1) - the catalytic core - and CF(0) - the membrane proton channel. CF(1) has five subunits: alpha(3), beta(3), gamma(1), delta(1), epsilon(1). CF(0) has three main subunits: a(1), b(2) and c(9-12). The alpha and beta chains form an alternating ring which encloses part of the gamma chain. CF(1) is attached to CF(0) by a central stalk formed by the gamma and epsilon chains, while a peripheral stalk is formed by the delta and b chains.

The protein resides in the cell inner membrane. The catalysed reaction is ATP + H2O + 4 H(+)(in) = ADP + phosphate + 5 H(+)(out). Produces ATP from ADP in the presence of a proton gradient across the membrane. The alpha chain is a regulatory subunit. The sequence is that of ATP synthase subunit alpha from Paracoccus denitrificans (strain Pd 1222).